A 287-amino-acid chain; its full sequence is Shikimate dehydrogenase (NADP(+)) (287 aa).

Residues serine 20–serine 22 and threonine 67 each bind shikimate. The active-site Proton acceptor is the lysine 71. Glutamate 84 contacts NADP(+). The shikimate site is built by asparagine 93 and aspartate 108. Residues glycine 132 to alanine 136, asparagine 156 to arginine 161, and methionine 226 contribute to the NADP(+) site. Tyrosine 228 serves as a coordination point for shikimate. Glycine 250 contacts NADP(+).

The protein belongs to the shikimate dehydrogenase family. Homodimer.

The catalysed reaction is shikimate + NADP(+) = 3-dehydroshikimate + NADPH + H(+). Its pathway is metabolic intermediate biosynthesis; chorismate biosynthesis; chorismate from D-erythrose 4-phosphate and phosphoenolpyruvate: step 4/7. Involved in the biosynthesis of the chorismate, which leads to the biosynthesis of aromatic amino acids. Catalyzes the reversible NADPH linked reduction of 3-dehydroshikimate (DHSA) to yield shikimate (SA). The chain is Shikimate dehydrogenase (NADP(+)) from Bordetella bronchiseptica (strain ATCC BAA-588 / NCTC 13252 / RB50) (Alcaligenes bronchisepticus).